Reading from the N-terminus, the 1002-residue chain is Mannan endo-1,4-beta-mannosidase (1002 aa).

The signal sequence occupies residues 1–28 (MKTTVTKLLATVAAASTIFGMSTLPAFA). In terms of domain architecture, GH26 spans 49–396 (AETRALFDKL…ADSNKNLMAS (348 aa)). His-144 contacts substrate. Glu-205 acts as the Proton donor in catalysis. Residues Trp-210 and Tyr-278 each contribute to the substrate site. Glu-316 acts as the Nucleophile in catalysis. Lys-384 is a substrate binding site. CBM11 domains follow at residues 523–703 (VDNV…GKRD) and 717–897 (AKAQ…NEQT). Disordered stretches follow at residues 702 to 722 (RDAYAPNTNPTPGNTAKAQSV) and 888 to 969 (PAEN…LSRT). Residues 707 to 719 (PNTNPTPGNTAKA) are compositionally biased toward polar residues. Composition is skewed to basic and acidic residues over residues 897-913 (TPKDESKTEVKADKEQE) and 952-966 (PDTKEPADNTGKDGL). The LPXTG sorting signal signature appears at 966–970 (LSRTG). At Thr-969 the chain carries Pentaglycyl murein peptidoglycan amidated threonine. The propeptide at 970–1002 (GSNIISAIAAVAVLLLGGCAVLIARKRKGGDIE) is removed by sortase.

It belongs to the glycosyl hydrolase 26 family. Homodimer.

It localises to the secreted. It is found in the cell wall. It catalyses the reaction Random hydrolysis of (1-&gt;4)-beta-D-mannosidic linkages in mannans, galactomannans and glucomannans.. Functionally, beta-mannanase likely involved in the utilization of carbohydrates in the human gut. Catalyzes the hydrolysis of different beta-1,4-linked mannans, such as ivory nut mannan, konjac glucomannan, as well as carob and guar gum galactomannans, to a mixture of oligosaccharides. The dominant product from ivory nut mannan is found to be mannotriose; mannobiose and mannotetraose are produced to a lesser extent. Does not hydrolyze mannobiose, and hydrolyzes mannotriose at a significantly lower rate than the longer oligosaccharides. In Bifidobacterium adolescentis (strain ATCC 15703 / DSM 20083 / NCTC 11814 / E194a), this protein is Mannan endo-1,4-beta-mannosidase.